Here is a 261-residue protein sequence, read N- to C-terminus: Carboxy-terminal domain RNA polymerase II polypeptide A small phosphatase 1 (261 aa).

At methionine 1 the chain carries N-acetylmethionine. Positions 1-10 (MDSSAVITQI) are enriched in polar residues. The disordered stretch occupies residues 1–33 (MDSSAVITQISKEEARGPLRGKGDQKSAASQKP). The span at 11 to 25 (SKEEARGPLRGKGDQ) shows a compositional bias: basic and acidic residues. An FCP1 homology domain is found at 86–244 (QDSDKICVVI…HDLLPFFEQL (159 aa)). The active-site 4-aspartylphosphate intermediate is the aspartate 96. Residues aspartate 96, aspartate 98, and asparagine 207 each contribute to the Mg(2+) site. Aspartate 98 serves as the catalytic Proton donor.

As to quaternary structure, monomer. Interacts with GTF2F1. Interacts with REST. Mg(2+) is required as a cofactor. Expression is restricted to non-neuronal tissues. Highest expression in skeletal muscle, spleen, lung and placenta.

Its subcellular location is the nucleus. It carries out the reaction O-phospho-L-seryl-[protein] + H2O = L-seryl-[protein] + phosphate. It catalyses the reaction O-phospho-L-threonyl-[protein] + H2O = L-threonyl-[protein] + phosphate. Stimulated by GTF2F1. Inhibited by beryllofluoride anions. Preferentially catalyzes the dephosphorylation of 'Ser-5' within the tandem 7 residue repeats in the C-terminal domain (CTD) of the largest RNA polymerase II subunit POLR2A. Negatively regulates RNA polymerase II transcription, possibly by controlling the transition from initiation/capping to processive transcript elongation. Recruited by REST to neuronal genes that contain RE-1 elements, leading to neuronal gene silencing in non-neuronal cells. This chain is Carboxy-terminal domain RNA polymerase II polypeptide A small phosphatase 1 (CTDSP1), found in Homo sapiens (Human).